Reading from the N-terminus, the 663-residue chain is MIDKRDDKPFKLKSKYKPSGDQPQAIESLVDNIEGGEKAQILLGATGTGKTYTMSQVISKVNKPTLVIAHNKTLAGQLYGEFKEFFPDNAVEYFVSYYDYYQPEAYVPSSDTYIEKDSSVNDEIDKLRHSATASLLERNDVIVVASVSCIYGLGSPKEYADSAVSLRPGQEISRDTLLNQLVDIQFERNDIDFQRGCFRVRGDVVEVFPASRDEHAFRVEFFGDEIDRICEIESLTGKTIGEVDHLVLFPATHFVTNDEHMEQSIAKIQAELAEQLQLFESEGKLLEAQRLRQRTEYDIEMLREMGYTSGVENYSRHMDGRSPGEPPYTLLDFFPEDFLIMIDESHMTMGQIKGMYNGDQARKQMLVDYGFRLPSALDNRPLRREEFESHVHQIVYVSATPGEYEMSQTNTIIEQIIRPTGLLDPEIDVRPSMGQMDDLLGEINQRVARDERTFITTLTKKMAEDLTDYLKEMGVKVKYMHSDIKTLERTEIIRDLRLGVFDVLIGINLLREGIDVPEVSLVAILDADKEGFLRNERGLIQTIGRAARNVDGHVIMYADKMTDSMQRAIDETARRREIQIAYNKAHGIVPQTIKKDIRGLISISKTSHNDISKEEMDYESMSRGERKEAINALQKQMQEAAELLDFELAAQMRDLILELKLMD.

A compositionally biased stretch (basic and acidic residues) spans 1 to 10; that stretch reads MIDKRDDKPF. A disordered region spans residues 1–23; sequence MIDKRDDKPFKLKSKYKPSGDQP. One can recognise a Helicase ATP-binding domain in the interval 31 to 271; the sequence is DNIEGGEKAQ…EQSIAKIQAE (241 aa). ATP is bound at residue 44–51; sequence GATGTGKT. The Beta-hairpin motif lies at 97 to 120; the sequence is YYDYYQPEAYVPSSDTYIEKDSSV. Residues 435–601 form the Helicase C-terminal domain; sequence QMDDLLGEIN…TIKKDIRGLI (167 aa). The 36-residue stretch at 627-662 folds into the UVR domain; that stretch reads KEAINALQKQMQEAAELLDFELAAQMRDLILELKLM.

It belongs to the UvrB family. In terms of assembly, forms a heterotetramer with UvrA during the search for lesions. Interacts with UvrC in an incision complex.

It is found in the cytoplasm. The UvrABC repair system catalyzes the recognition and processing of DNA lesions. A damage recognition complex composed of 2 UvrA and 2 UvrB subunits scans DNA for abnormalities. Upon binding of the UvrA(2)B(2) complex to a putative damaged site, the DNA wraps around one UvrB monomer. DNA wrap is dependent on ATP binding by UvrB and probably causes local melting of the DNA helix, facilitating insertion of UvrB beta-hairpin between the DNA strands. Then UvrB probes one DNA strand for the presence of a lesion. If a lesion is found the UvrA subunits dissociate and the UvrB-DNA preincision complex is formed. This complex is subsequently bound by UvrC and the second UvrB is released. If no lesion is found, the DNA wraps around the other UvrB subunit that will check the other stand for damage. This Streptococcus pyogenes serotype M2 (strain MGAS10270) protein is UvrABC system protein B.